A 310-amino-acid chain; its full sequence is N-acetyl-gamma-glutamyl-phosphate reductase (310 aa).

C117 is a catalytic residue.

This sequence belongs to the NAGSA dehydrogenase family. Type 2 subfamily.

The protein resides in the cytoplasm. The catalysed reaction is N-acetyl-L-glutamate 5-semialdehyde + phosphate + NADP(+) = N-acetyl-L-glutamyl 5-phosphate + NADPH + H(+). Its pathway is amino-acid biosynthesis; L-arginine biosynthesis; N(2)-acetyl-L-ornithine from L-glutamate: step 3/4. Its function is as follows. Catalyzes the NADPH-dependent reduction of N-acetyl-5-glutamyl phosphate to yield N-acetyl-L-glutamate 5-semialdehyde. This chain is N-acetyl-gamma-glutamyl-phosphate reductase, found in Rhizobium leguminosarum bv. trifolii (strain WSM2304).